The sequence spans 643 residues: 1-deoxy-D-xylulose-5-phosphate synthase (643 aa).

Thiamine diphosphate is bound by residues histidine 78 and 119–121 (AHS). Position 150 (aspartate 150) interacts with Mg(2+). Thiamine diphosphate-binding positions include 151–152 (GS), asparagine 179, tyrosine 288, and glutamate 370. Mg(2+) is bound at residue asparagine 179.

This sequence belongs to the transketolase family. DXPS subfamily. As to quaternary structure, homodimer. Requires Mg(2+) as cofactor. Thiamine diphosphate is required as a cofactor.

It catalyses the reaction D-glyceraldehyde 3-phosphate + pyruvate + H(+) = 1-deoxy-D-xylulose 5-phosphate + CO2. Its pathway is metabolic intermediate biosynthesis; 1-deoxy-D-xylulose 5-phosphate biosynthesis; 1-deoxy-D-xylulose 5-phosphate from D-glyceraldehyde 3-phosphate and pyruvate: step 1/1. Catalyzes the acyloin condensation reaction between C atoms 2 and 3 of pyruvate and glyceraldehyde 3-phosphate to yield 1-deoxy-D-xylulose-5-phosphate (DXP). The chain is 1-deoxy-D-xylulose-5-phosphate synthase from Brucella canis (strain ATCC 23365 / NCTC 10854 / RM-666).